A 322-amino-acid polypeptide reads, in one-letter code: Glycerate dehydrogenase (322 aa).

NAD(+) is bound by residues 158 to 159, Asp-178, 239 to 241, and Asp-265; these read SI and TAR. Arg-241 is a catalytic residue. Glu-270 is an active-site residue. His-288 serves as the catalytic Proton donor. An NAD(+)-binding site is contributed by 288 to 291; the sequence is HIGS.

This sequence belongs to the D-isomer specific 2-hydroxyacid dehydrogenase family. In terms of assembly, homodimer.

It catalyses the reaction (R)-glycerate + NAD(+) = 3-hydroxypyruvate + NADH + H(+). It participates in one-carbon metabolism; formaldehyde assimilation via serine pathway. Functionally, active on hydroxypyruvate and glyoxylate. The polypeptide is Glycerate dehydrogenase (Hyphomicrobium methylovorum).